The following is a 396-amino-acid chain: 1-deoxy-D-xylulose 5-phosphate reductoisomerase (396 aa).

5 residues coordinate NADPH: Thr13, Gly14, Ser15, Ile16, and Asn127. Lys128 lines the 1-deoxy-D-xylulose 5-phosphate pocket. Glu129 is a binding site for NADPH. Asp153 is a binding site for Mn(2+). 4 residues coordinate 1-deoxy-D-xylulose 5-phosphate: Ser154, Glu155, Ser184, and His207. Glu155 contacts Mn(2+). Gly213 is an NADPH binding site. Residues Ser220, Asn225, Lys226, and Glu229 each contribute to the 1-deoxy-D-xylulose 5-phosphate site. Mn(2+) is bound at residue Glu229.

The protein belongs to the DXR family. It depends on Mg(2+) as a cofactor. Mn(2+) is required as a cofactor.

The enzyme catalyses 2-C-methyl-D-erythritol 4-phosphate + NADP(+) = 1-deoxy-D-xylulose 5-phosphate + NADPH + H(+). It participates in isoprenoid biosynthesis; isopentenyl diphosphate biosynthesis via DXP pathway; isopentenyl diphosphate from 1-deoxy-D-xylulose 5-phosphate: step 1/6. Catalyzes the NADPH-dependent rearrangement and reduction of 1-deoxy-D-xylulose-5-phosphate (DXP) to 2-C-methyl-D-erythritol 4-phosphate (MEP). This is 1-deoxy-D-xylulose 5-phosphate reductoisomerase from Stutzerimonas stutzeri (strain A1501) (Pseudomonas stutzeri).